Reading from the N-terminus, the 377-residue chain is Iris (377 aa).

2 N-linked (GlcNAc...) asparagine glycosylation sites follow: Asn-11 and Asn-226.

Belongs to the serpin family. In terms of tissue distribution, female saliva (at protein level). Female salivary gland (at protein level).

The protein resides in the secreted. Serine protease inhibitor with anticoagulant and immunosuppressive properties that can modulate blood feeding of ticks on vertebrate species. Strongly inhibits human leukocyte elastase (ELANE) and porcine pancreatic elastase. Moderately inhibits human tPA/tissue-type plasminogen activator (PLAT), coagulation factor Xa (F10), thrombin (F2) and trypsin. Does not inhibit human plasmin (PLG). Inhibits platelet aggregation. Inhibits the intrinsic pathway of blood coagulation in the host. Inhibits fibrinolysis in the host. Inhibits proliferation of mouse splenocytes. Decreases the number of IFN-gamma (IFNG)-producing human peripheral blood mononuclear cells (PBMCs) after stimulation with phytohemagglutinin A (PHA). Increases the number of IL10-producing human PBMCs after stimulation with lipopolysaccharides (LPS) with no significant effect on IL10 production. Inhibits production of IFNG, IL6, TNF-alpha (TNF) and CXCL8 by human PBMCs. Binds to monocyte/macrophage subpopulation of the host PBMCs. Increases both survival rate and survival time in mice with LPS-induced endotoxemic shock. The sequence is that of Iris from Ixodes ricinus (Common tick).